The primary structure comprises 725 residues: Probable dipeptidyl-peptidase 5 (725 aa).

The N-terminal stretch at Met-1–Ala-18 is a signal peptide. 6 N-linked (GlcNAc...) asparagine glycosylation sites follow: Asn-75, Asn-96, Asn-153, Asn-258, Asn-383, and Asn-453. Ser-563 (charge relay system) is an active-site residue. N-linked (GlcNAc...) asparagine glycosylation is present at Asn-610. Active-site charge relay system residues include Asp-646 and His-678.

The protein belongs to the peptidase S9C family.

Its subcellular location is the secreted. Functionally, extracellular dipeptidyl-peptidase which removes N-terminal dipeptides sequentially from polypeptides having unsubstituted N-termini. In Aspergillus flavus (strain ATCC 200026 / FGSC A1120 / IAM 13836 / NRRL 3357 / JCM 12722 / SRRC 167), this protein is Probable dipeptidyl-peptidase 5 (dpp5).